We begin with the raw amino-acid sequence, 77 residues long: Translation initiation factor IF-1, chloroplastic (77 aa).

The region spanning 1–71 (MKEQKWIHEG…TRGRIIYRLR (71 aa)) is the S1-like domain.

The protein belongs to the IF-1 family. As to quaternary structure, component of the 30S ribosomal translation pre-initiation complex which assembles on the 30S ribosome in the order IF-2 and IF-3, IF-1 and N-formylmethionyl-tRNA(fMet); mRNA recruitment can occur at any time during PIC assembly.

It localises to the plastid. The protein resides in the chloroplast. Its function is as follows. One of the essential components for the initiation of protein synthesis. Stabilizes the binding of IF-2 and IF-3 on the 30S subunit to which N-formylmethionyl-tRNA(fMet) subsequently binds. Helps modulate mRNA selection, yielding the 30S pre-initiation complex (PIC). Upon addition of the 50S ribosomal subunit IF-1, IF-2 and IF-3 are released leaving the mature 70S translation initiation complex. This is Translation initiation factor IF-1, chloroplastic from Garrya elliptica (Wavyleaf silktassel).